Reading from the N-terminus, the 100-residue chain is Cytochrome b (100 aa).

Transmembrane regions (helical) follow at residues 1 to 21 (MGSL…FLAM), 45 to 66 (WLIR…YLHI), and 81 to 100 (WNIG…VGYV). Residues H51 and H65 each coordinate heme b.

Belongs to the cytochrome b family. As to quaternary structure, the cytochrome bc1 complex contains 3 respiratory subunits (MT-CYB, CYC1 and UQCRFS1), 2 core proteins (UQCRC1 and UQCRC2) and probably 6 low-molecular weight proteins. Requires heme b as cofactor.

The protein resides in the mitochondrion inner membrane. Its function is as follows. Component of the ubiquinol-cytochrome c reductase complex (complex III or cytochrome b-c1 complex) that is part of the mitochondrial respiratory chain. The b-c1 complex mediates electron transfer from ubiquinol to cytochrome c. Contributes to the generation of a proton gradient across the mitochondrial membrane that is then used for ATP synthesis. In Polypterus sp. (Bichir), this protein is Cytochrome b (mt-cyb).